We begin with the raw amino-acid sequence, 361 residues long: Protein Csal_2339 (361 aa).

Ser-91 functions as the Proton acceptor in the catalytic mechanism. Substrate is bound by residues 92 to 93 and 259 to 260; these read GS and GT.

Belongs to the proline racemase family.

The catalysed reaction is trans-4-hydroxy-L-proline = cis-4-hydroxy-D-proline. In terms of biological role, in vitro, catalyzes the epimerization of trans-4-hydroxy-L-proline (t4LHyp) to cis-4-hydroxy-D-proline (c4DHyp), albeit with very low efficiency. The physiological substrate may be different. Displays neither proline racemase activity nor t3LHyp dehydratase activity. The polypeptide is Protein Csal_2339 (Chromohalobacter salexigens (strain ATCC BAA-138 / DSM 3043 / CIP 106854 / NCIMB 13768 / 1H11)).